The following is a 284-amino-acid chain: Bifunctional protein FolD (284 aa).

NADP(+)-binding positions include 166–168 (GRS) and Ser-191.

Belongs to the tetrahydrofolate dehydrogenase/cyclohydrolase family. Homodimer.

It catalyses the reaction (6R)-5,10-methylene-5,6,7,8-tetrahydrofolate + NADP(+) = (6R)-5,10-methenyltetrahydrofolate + NADPH. The enzyme catalyses (6R)-5,10-methenyltetrahydrofolate + H2O = (6R)-10-formyltetrahydrofolate + H(+). The protein operates within one-carbon metabolism; tetrahydrofolate interconversion. Functionally, catalyzes the oxidation of 5,10-methylenetetrahydrofolate to 5,10-methenyltetrahydrofolate and then the hydrolysis of 5,10-methenyltetrahydrofolate to 10-formyltetrahydrofolate. The polypeptide is Bifunctional protein FolD (Leptospira interrogans serogroup Icterohaemorrhagiae serovar copenhageni (strain Fiocruz L1-130)).